The chain runs to 202 residues: Large ribosomal subunit protein bL25 (202 aa).

Belongs to the bacterial ribosomal protein bL25 family. CTC subfamily. As to quaternary structure, part of the 50S ribosomal subunit; part of the 5S rRNA/L5/L18/L25 subcomplex. Contacts the 5S rRNA. Binds to the 5S rRNA independently of L5 and L18.

Functionally, this is one of the proteins that binds to the 5S RNA in the ribosome where it forms part of the central protuberance. The protein is Large ribosomal subunit protein bL25 of Corynebacterium efficiens (strain DSM 44549 / YS-314 / AJ 12310 / JCM 11189 / NBRC 100395).